A 431-amino-acid polypeptide reads, in one-letter code: Trigger factor (431 aa).

A PPIase FKBP-type domain is found at 164 to 249 (GDIAVIDFKG…IKEIKRKELP (86 aa)).

This sequence belongs to the FKBP-type PPIase family. Tig subfamily.

It localises to the cytoplasm. It carries out the reaction [protein]-peptidylproline (omega=180) = [protein]-peptidylproline (omega=0). Involved in protein export. Acts as a chaperone by maintaining the newly synthesized protein in an open conformation. Functions as a peptidyl-prolyl cis-trans isomerase. The chain is Trigger factor from Clostridium acetobutylicum (strain ATCC 824 / DSM 792 / JCM 1419 / IAM 19013 / LMG 5710 / NBRC 13948 / NRRL B-527 / VKM B-1787 / 2291 / W).